The primary structure comprises 124 residues: Large ribosomal subunit protein bL12 (124 aa).

Belongs to the bacterial ribosomal protein bL12 family. In terms of assembly, homodimer. Part of the ribosomal stalk of the 50S ribosomal subunit. Forms a multimeric L10(L12)X complex, where L10 forms an elongated spine to which 2 to 4 L12 dimers bind in a sequential fashion. Binds GTP-bound translation factors.

In terms of biological role, forms part of the ribosomal stalk which helps the ribosome interact with GTP-bound translation factors. Is thus essential for accurate translation. The sequence is that of Large ribosomal subunit protein bL12 from Burkholderia cenocepacia (strain ATCC BAA-245 / DSM 16553 / LMG 16656 / NCTC 13227 / J2315 / CF5610) (Burkholderia cepacia (strain J2315)).